A 214-amino-acid chain; its full sequence is 3,4-dihydroxy-2-butanone 4-phosphate synthase (214 aa).

D-ribulose 5-phosphate contacts are provided by residues 37 to 38, Asp42, 150 to 154, and Glu174; these read RE and RRGHT. Glu38 is a binding site for Mg(2+). His153 is a Mg(2+) binding site.

It belongs to the DHBP synthase family. In terms of assembly, homodimer. It depends on Mg(2+) as a cofactor. Mn(2+) is required as a cofactor.

It carries out the reaction D-ribulose 5-phosphate = (2S)-2-hydroxy-3-oxobutyl phosphate + formate + H(+). Its pathway is cofactor biosynthesis; riboflavin biosynthesis; 2-hydroxy-3-oxobutyl phosphate from D-ribulose 5-phosphate: step 1/1. Catalyzes the conversion of D-ribulose 5-phosphate to formate and 3,4-dihydroxy-2-butanone 4-phosphate. The sequence is that of 3,4-dihydroxy-2-butanone 4-phosphate synthase from Desulfotalea psychrophila (strain LSv54 / DSM 12343).